Here is a 291-residue protein sequence, read N- to C-terminus: Undecaprenyl-diphosphatase (291 aa).

Helical transmembrane passes span 1–21 (MLIL…LTEF), 48–68 (SAFT…AWVF), 99–119 (LHII…DDVI), 123–143 (LFSV…MIIA), 159–179 (INYF…WPGF), 200–220 (SDFT…LSLV), 236–256 (LGFL…LYLI), and 269–289 (IVLV…QGIT).

The protein belongs to the UppP family.

It is found in the cell membrane. The catalysed reaction is di-trans,octa-cis-undecaprenyl diphosphate + H2O = di-trans,octa-cis-undecaprenyl phosphate + phosphate + H(+). Its function is as follows. Catalyzes the dephosphorylation of undecaprenyl diphosphate (UPP). Confers resistance to bacitracin. In Staphylococcus saprophyticus subsp. saprophyticus (strain ATCC 15305 / DSM 20229 / NCIMB 8711 / NCTC 7292 / S-41), this protein is Undecaprenyl-diphosphatase.